The sequence spans 119 residues: Large ribosomal subunit protein bL20 (119 aa).

Belongs to the bacterial ribosomal protein bL20 family.

Its function is as follows. Binds directly to 23S ribosomal RNA and is necessary for the in vitro assembly process of the 50S ribosomal subunit. It is not involved in the protein synthesizing functions of that subunit. The sequence is that of Large ribosomal subunit protein bL20 from Clostridium perfringens (strain ATCC 13124 / DSM 756 / JCM 1290 / NCIMB 6125 / NCTC 8237 / Type A).